A 1070-amino-acid polypeptide reads, in one-letter code: DNA-directed RNA polymerase subunit beta (1070 aa).

The protein belongs to the RNA polymerase beta chain family. In plastids the minimal PEP RNA polymerase catalytic core is composed of four subunits: alpha, beta, beta', and beta''. When a (nuclear-encoded) sigma factor is associated with the core the holoenzyme is formed, which can initiate transcription.

It is found in the plastid. It localises to the chloroplast. It carries out the reaction RNA(n) + a ribonucleoside 5'-triphosphate = RNA(n+1) + diphosphate. DNA-dependent RNA polymerase catalyzes the transcription of DNA into RNA using the four ribonucleoside triphosphates as substrates. This Vitis vinifera (Grape) protein is DNA-directed RNA polymerase subunit beta.